Here is a 21-residue protein sequence, read N- to C-terminus: Histone H2B 1 (21 aa).

The disordered stretch occupies residues 1 to 21; the sequence is MPDPAKTAPKKGSKKAVTKXA. Lys-6 and Lys-11 each carry N6-acetyllysine. A compositionally biased stretch (basic residues) spans 8–21; it reads APKKGSKKAVTKXA. The residue at position 13 (Ser-13) is a Phosphoserine. N6-acetyllysine is present on residues Lys-14 and Lys-19. Lys-19 is covalently cross-linked (Glycyl lysine isopeptide (Lys-Gly) (interchain with G-Cter in ubiquitin)).

This sequence belongs to the histone H2B family. The nucleosome is a histone octamer containing two molecules each of H2A, H2B, H3 and H4 assembled in one H3-H4 heterotetramer and two H2A-H2B heterodimers. The octamer wraps approximately 147 bp of DNA. Monoubiquitination at the C-terminal Lys gives a specific tag for epigenetic transcriptional activation and is also prerequisite for histone H3 'Lys-4' and 'Lys-79' methylation. Post-translationally, phosphorylated during apoptosis; which facilitates apoptotic chromatin condensation.

It localises to the nucleus. It is found in the chromosome. Functionally, core component of nucleosome. Nucleosomes wrap and compact DNA into chromatin, limiting DNA accessibility to the cellular machineries which require DNA as a template. Histones thereby play a central role in transcription regulation, DNA repair, DNA replication and chromosomal stability. DNA accessibility is regulated via a complex set of post-translational modifications of histones, also called histone code, and nucleosome remodeling. Its function is as follows. Has broad-spectrum antimicrobial and antibacterial activity. It is important in the antimicrobial defenses of fish skin and possesses strong activity against saprolegnia, the most common fungal infection in fish. It is also inhibitory to fish bacterial pathogens, such as aeromonas hydrophila, vibrio alginolyticus and E.coli D31. This chain is Histone H2B 1, found in Ictalurus punctatus (Channel catfish).